The primary structure comprises 266 residues: MINILNAIILGIVQGITEFLPISSSGHLLLFRHFMHLKLPIIFDIYLHLATVLVIIIYYRQRILELFLTFIRFSLRKTNKSDLTNLKLILLILIITIVTGVVGTFISKYERMFILPFILINFIITGILILMLEFNFFKIDFKGNILLVGIFIGLMQGLGAFPGISRSGITIFSAVSLGFNRKSAFEISFLSLIPIVFGAILFKYKEFYDIFMVLNFFEINLGALVAFVVGIISINFFFKMLNNKKLYYFSIYLFALSITFCCFFRI.

A run of 8 helical transmembrane segments spans residues 2-22, 39-59, 86-106, 112-132, 145-165, 184-204, 212-232, and 246-266; these read INIL…FLPI, LPII…IIYY, LKLI…GTFI, MFIL…ILML, ILLV…PGIS, AFEI…LFKY, MVLN…VGII, and LYYF…FFRI.

This sequence belongs to the UppP family.

The protein resides in the cell inner membrane. It catalyses the reaction di-trans,octa-cis-undecaprenyl diphosphate + H2O = di-trans,octa-cis-undecaprenyl phosphate + phosphate + H(+). Catalyzes the dephosphorylation of undecaprenyl diphosphate (UPP). Confers resistance to bacitracin. This chain is Undecaprenyl-diphosphatase, found in Borrelia garinii subsp. bavariensis (strain ATCC BAA-2496 / DSM 23469 / PBi) (Borreliella bavariensis).